Reading from the N-terminus, the 147-residue chain is Cyanate hydratase (147 aa).

Catalysis depends on residues R88, E91, and S114.

Belongs to the cyanase family.

The enzyme catalyses cyanate + hydrogencarbonate + 3 H(+) = NH4(+) + 2 CO2. Functionally, catalyzes the reaction of cyanate with bicarbonate to produce ammonia and carbon dioxide. The polypeptide is Cyanate hydratase (Ralstonia pickettii (strain 12J)).